The sequence spans 1655 residues: Protein scribble homolog (1655 aa).

The interval 1–818 (MLKCIPLWRC…MRVWRERMVE (818 aa)) is sufficient for targeting to adherens junction and to inhibit cell proliferation. The residue at position 37 (S37) is a Phosphoserine. LRR repeat units follow at residues 37 to 58 (SLEE…FFRL), 60 to 81 (NLRK…VANF), 83 to 104 (QLVE…IKFC), 106 to 127 (ALEI…FTQL), 129 to 150 (SLAH…VGNL), 152 to 174 (NLVT…SFLV), 175 to 197 (KLEQ…GALP), 198 to 219 (NLRE…LGNL), 221 to 243 (RLVC…GGLV), 244 to 265 (LLTD…IGQL), 267 to 288 (QLSI…IGDC), 290 to 312 (NLSE…GKLT), 313 to 334 (KLTN…IGGC), 336 to 357 (ALSV…LAHT), 359 to 381 (ELHV…THLN), and 382 to 402 (LKAL…QTED). T378 is subject to Phosphothreonine. Disordered regions lie at residues 417 to 440 (PQQP…WSDA), 459 to 606 (DAEE…IRKD), and 628 to 702 (LLQG…VSAP). The stretch at 458–474 (EDAEEAAAEKRGLQRRA) forms a coiled coil. Phosphothreonine is present on T475. Positions 479 to 494 (SELKVMKRSIEGRRSE) are enriched in basic and acidic residues. A Phosphoserine modification is found at S504. Low complexity predominate over residues 537 to 555 (EGPSAEAQGGSQQEATTAG). Acidic residues-rich tracts occupy residues 556–565 (GEEDAEEDYQ) and 660–694 (EEEE…EEDK). The stretch at 656-701 (RAQKEEEEEEEGSPQEEEEEEEEENRAEEEEASTEEEDKEGAVVSA) forms a coiled coil. At S688 the chain carries Phosphoserine. A Phosphothreonine modification is found at T689. Residues S708 and S764 each carry the phosphoserine modification. Positions 717–1229 (IEPARIEEEE…SLESISSIDR (513 aa)) are interaction with ARHGEF7. One can recognise a PDZ 1 domain in the interval 728–815 (TLTILRQTGG…AVQMRVWRER (88 aa)). The interval 728–1194 (TLTILRQTGG…TVLVCDGFEA (467 aa)) is required for interaction with VIM. T826 is modified (phosphothreonine). The tract at residues 827–853 (PLRPEDDYSPRERRGGGLRLPLLPPES) is disordered. Basic and acidic residues predominate over residues 829–841 (RPEDDYSPRERRG). Phosphoserine is present on residues S835, S853, S875, and S939. PDZ domains lie at 862-950 (VACL…EREA), 1004-1093 (EIRL…RRDP), and 1100-1194 (ELCI…GFEA). The interaction with tick-borne encephalitis virus RNA-directed RNA polymerase NS5 stretch occupies residues 1105 to 1117 (KAPGERLGISIRG). Phosphoserine is present on residues S1140, S1220, S1223, S1226, S1232, S1276, S1279, S1295, S1298, S1306, and S1309. The span at 1227 to 1242 (IDRELSPEGPGKEKEL) shows a compositional bias: basic and acidic residues. A disordered region spans residues 1227 to 1246 (IDRELSPEGPGKEKELPGQT). The segment at 1277-1489 (AGSVQRVPSG…APERALSPAE (213 aa)) is disordered. Pro residues predominate over residues 1302 to 1311 (QQPPSPPSPD). T1342 is modified (phosphothreonine). The residue at position 1348 (S1348) is a Phosphoserine. The segment covering 1353–1365 (SFRERQKYFELEV) has biased composition (basic and acidic residues). S1378 is modified (phosphoserine). Positions 1379–1419 (LVGADDLRKMQEEEARKLQQKRAQMLREAAEAGAEARLALD) form a coiled coil. Basic and acidic residues predominate over residues 1383 to 1395 (DDLRKMQEEEARK). Residues 1409–1421 (EAGAEARLALDGE) show a composition bias toward low complexity. Positions 1422–1432 (TLGEEEQEDEQ) are enriched in acidic residues. A phosphoserine mark is found at S1437, S1445, and S1448. A compositionally biased stretch (basic and acidic residues) spans 1461 to 1472 (AKAERRHQERLR). Phosphoserine occurs at positions 1475, 1486, and 1508. Residues 1520 to 1568 (LSRSQEGRGTRGPLERLAEAPSPAPTPSPTPVEDLGPQTSTSPGRLPLS) form a disordered region. The segment covering 1524–1537 (QEGRGTRGPLERLA) has biased composition (basic and acidic residues). S1541 bears the Phosphoserine mark. At T1545 the chain carries Phosphothreonine. S1547, S1561, and S1591 each carry phosphoserine. Positions 1622–1655 (GRPSPGAVGPEDVALCSSRRPVRPGRRGLGPVPS) are disordered.

The protein belongs to the LAP (LRR and PDZ) protein family. In terms of assembly, interacts with UBE3A. Interacts with PAK1 and PAK2. Interacts (via PDZ domains) with VANGL2. Interacts (via PDZ domains) with LPP and TRIP6; the interaction is direct. Interacts (via PDZ domains) with TJP2. Interacts (via PDZ domains) with APC; may mediate APC targeting to adherens junctions of epithelial cells. Interacts (via PDZ domains) with TSHR; regulates TSHR trafficking and function. Interacts with ARHGEF7 and GIT1; interacts directly with ARHGEF7. Interacts with CTNNB1. Interacts with MAPK12. Interacts (via PDZ domains 1 and 3) with MCC. Interacts with DLG5. Interacts with STK4/MST1 and LATS1 in the presence of DLG5. Interacts (via PDZ domain 3) with CRTAM (via PDZ-binding motif); the interaction promotes CRTAM and SCRIB polarization in a subset of CD4+ T-cells. Interacts with YES1, when YES1 is in a closed conformation; the interaction facilitates YES1 autophosphorylation. Interacts (via PDZ domains) with VIM; the interaction protects SCRIB from proteasomal degradation and facilitates SCRIB localization to intermediate filaments, the interaction is reduced by cell contact inhibition. (Microbial infection) Interacts (via fourth PDZ domain) with tick-borne encephalitis virus RNA-directed RNA polymerase NS5; this interaction targets viral NS5 to the cell membrane periphery and nucleus and prevents STAT1 phosphorylation, and thus, the activation of the JAK-STAT signaling pathway. Interacts with HPV E6. Interacts with influenza A virus protein NS1; the interaction results in the translocation of SCRIB from the cell membrane to perinuclear puncta. In terms of processing, ubiquitinated; targeted for UBE3A-dependent multiubiquitination in the presence of high-risk HPV E6 proteins and degraded. Post-translationally, palmitoylated. Could be depalmitoylated by LYPLA1 and/or LYPLA2. Palmitoylation of SCRIB by ZDHHC7 is required for its localization to cell-cell junctions, function in the establishement of epithelial cell polarity and the regulation of downstream signaling pathways important for epithelial cell differentiation. In terms of tissue distribution, expressed in kidney, skeletal muscles, liver, lung, breast, intestine, placenta and skin mainly in epithelial cells (at protein level).

The protein resides in the cell membrane. It localises to the cell junction. It is found in the adherens junction. Its subcellular location is the cell projection. The protein localises to the lamellipodium. The protein resides in the cytoplasm. It localises to the postsynapse. It is found in the presynapse. In terms of biological role, scaffold protein involved in different aspects of polarized cell differentiation regulating epithelial and neuronal morphogenesis and T-cell polarization. Via its interaction with CRTAM, required for the late phase polarization of a subset of CD4+ T-cells, which in turn regulates TCR-mediated proliferation and IFNG and IL22 production. Plays a role in cell directional movement, cell orientation, cell sheet organization and Golgi complex polarization at the cell migration front. Promotes epithelial cell layer barrier function via maintaining cell-cell adhesion. Most probably functions in the establishment of apico-basal cell polarity. May function in cell proliferation regulating progression from G1 to S phase and as a positive regulator of apoptosis for instance during acinar morphogenesis of the mammary epithelium. May regulate cell invasion via MAPK-mediated cell migration and adhesion. May play a role in exocytosis and in the targeting of synaptic vesicles to synapses. Functions as an activator of Rac GTPase activity. The polypeptide is Protein scribble homolog (Homo sapiens (Human)).